Consider the following 395-residue polypeptide: S-adenosylmethionine synthase (395 aa).

An ATP-binding site is contributed by His15. Asp17 is a Mg(2+) binding site. Glu43 lines the K(+) pocket. L-methionine is bound at residue Gln99. The segment at 99 to 109 (QSPDIAMGVNE) is flexible loop. ATP contacts are provided by residues 174–176 (DGK), 240–241 (RF), Asp249, 255–256 (RK), Ala272, and Lys276. Residue Asp249 coordinates L-methionine. Residue Lys280 coordinates L-methionine.

The protein belongs to the AdoMet synthase family. As to quaternary structure, homotetramer; dimer of dimers. Mg(2+) serves as cofactor. The cofactor is K(+).

Its subcellular location is the cytoplasm. It catalyses the reaction L-methionine + ATP + H2O = S-adenosyl-L-methionine + phosphate + diphosphate. Its pathway is amino-acid biosynthesis; S-adenosyl-L-methionine biosynthesis; S-adenosyl-L-methionine from L-methionine: step 1/1. Its function is as follows. Catalyzes the formation of S-adenosylmethionine (AdoMet) from methionine and ATP. The overall synthetic reaction is composed of two sequential steps, AdoMet formation and the subsequent tripolyphosphate hydrolysis which occurs prior to release of AdoMet from the enzyme. In Moorella thermoacetica (strain ATCC 39073 / JCM 9320), this protein is S-adenosylmethionine synthase.